Consider the following 322-residue polypeptide: Corticotropin-releasing factor-binding protein (322 aa).

The first 24 residues, 1–24, serve as a signal peptide directing secretion; sequence MSPNFKLQCHFILIFLTALRGESR. 5 cysteine pairs are disulfide-bonded: Cys60/Cys81, Cys104/Cys141, Cys183/Cys205, Cys237/Cys264, and Cys277/Cys318. N-linked (GlcNAc...) asparagine glycosylation occurs at Asn204.

This sequence belongs to the CRF-binding protein family.

Its subcellular location is the secreted. In terms of biological role, binds CRF and inactivates it. May prevent inappropriate pituitary-adrenal stimulation in pregnancy. In Homo sapiens (Human), this protein is Corticotropin-releasing factor-binding protein (CRHBP).